Here is a 513-residue protein sequence, read N- to C-terminus: Na(+)/H(+) antiporter NhaB (513 aa).

12 helical membrane-spanning segments follow: residues Leu23–Ala43, Ile52–Ile72, Leu97–Phe117, Leu120–Phe140, Phe144–Ile164, Leu202–Pro222, Phe238–Leu258, Ala303–Ile323, Thr348–Ile368, Leu391–Ile411, Ala447–Ile467, and Val475–Phe495.

The protein belongs to the NhaB Na(+)/H(+) (TC 2.A.34) antiporter family.

The protein resides in the cell inner membrane. It catalyses the reaction 2 Na(+)(in) + 3 H(+)(out) = 2 Na(+)(out) + 3 H(+)(in). Na(+)/H(+) antiporter that extrudes sodium in exchange for external protons. In Shigella flexneri serotype 5b (strain 8401), this protein is Na(+)/H(+) antiporter NhaB.